The primary structure comprises 249 residues: 2,3-bisphosphoglycerate-dependent phosphoglycerate mutase (249 aa).

Residues 9–16 (RHGESEWN), 22–23 (TG), Arg61, 88–91 (ERHY), Lys99, 115–116 (RR), and 184–185 (GN) contribute to the substrate site. Residue His10 is the Tele-phosphohistidine intermediate of the active site. Glu88 functions as the Proton donor/acceptor in the catalytic mechanism.

This sequence belongs to the phosphoglycerate mutase family. BPG-dependent PGAM subfamily.

The enzyme catalyses (2R)-2-phosphoglycerate = (2R)-3-phosphoglycerate. Its pathway is carbohydrate degradation; glycolysis; pyruvate from D-glyceraldehyde 3-phosphate: step 3/5. Its function is as follows. Catalyzes the interconversion of 2-phosphoglycerate and 3-phosphoglycerate. This Cutibacterium acnes (strain DSM 16379 / KPA171202) (Propionibacterium acnes) protein is 2,3-bisphosphoglycerate-dependent phosphoglycerate mutase.